The sequence spans 440 residues: Probable exopolygalacturonase C (440 aa).

Residues Met1–Gly21 form the signal peptide. 2 N-linked (GlcNAc...) asparagine glycosylation sites follow: Asn84 and Asn151. PbH1 repeat units lie at residues Gly188–Thr210, Gly217–Thr238, and Ser240–Ser261. Asn219 carries N-linked (GlcNAc...) asparagine glycosylation. Residue Asp231 is the Proton donor of the active site. His255 is a catalytic residue. The N-linked (GlcNAc...) asparagine glycan is linked to Asn271. A PbH1 4 repeat occupies Ile272–Ser293. Asn313 is a glycosylation site (N-linked (GlcNAc...) asparagine). A disulfide bridge links Cys389 with Cys395. Residue Asn434 is glycosylated (N-linked (GlcNAc...) asparagine).

This sequence belongs to the glycosyl hydrolase 28 family.

It is found in the secreted. The enzyme catalyses [(1-&gt;4)-alpha-D-galacturonosyl](n) + H2O = alpha-D-galacturonate + [(1-&gt;4)-alpha-D-galacturonosyl](n-1). In terms of biological role, specific in hydrolyzing the terminal glycosidic bond of polygalacturonic acid and oligogalacturonates. The chain is Probable exopolygalacturonase C (pgxC) from Aspergillus fumigatus (strain CBS 144.89 / FGSC A1163 / CEA10) (Neosartorya fumigata).